A 775-amino-acid polypeptide reads, in one-letter code: Polyribonucleotide nucleotidyltransferase (775 aa).

The segment at 223–247 is disordered; the sequence is DEQVPEKPRKGRRRGRKSSPRKKTD. Residues 231 to 243 show a composition bias toward basic residues; sequence RKGRRRGRKSSPR. 2 residues coordinate Mg(2+): Asp-567 and Asp-573. Positions 633 to 692 constitute a KH domain; the sequence is PRITTISVPVSKIGEVIGPKGKNINQITEDTGARVSIEDDGTVFISATSGGSAEAAVDRI. The region spanning 704 to 773 is the S1 motif domain; that stretch reads GERFLGTVVK…NRGKISLVPV (70 aa).

The protein belongs to the polyribonucleotide nucleotidyltransferase family. Mg(2+) is required as a cofactor.

Its subcellular location is the cytoplasm. It catalyses the reaction RNA(n+1) + phosphate = RNA(n) + a ribonucleoside 5'-diphosphate. Its function is as follows. Involved in mRNA degradation. Catalyzes the phosphorolysis of single-stranded polyribonucleotides processively in the 3'- to 5'-direction. The polypeptide is Polyribonucleotide nucleotidyltransferase (Corynebacterium kroppenstedtii (strain DSM 44385 / JCM 11950 / CIP 105744 / CCUG 35717)).